The sequence spans 273 residues: Large ribosomal subunit protein uL2c (273 aa).

The protein belongs to the universal ribosomal protein uL2 family. Part of the 50S ribosomal subunit.

The protein resides in the plastid. Its subcellular location is the apicoplast. The sequence is that of Large ribosomal subunit protein uL2c (rpl2) from Eimeria tenella (Coccidian parasite).